We begin with the raw amino-acid sequence, 376 residues long: Arf-GAP with dual PH domain-containing protein 2 (376 aa).

An Arf-GAP domain is found at 9–130 (KRLLELLQAA…EFMAEKAVSP (122 aa)). The segment at 25–48 (CADCGAADPDWASYKLGVFICLHC) adopts a C4-type zinc-finger fold. PH domains follow at residues 131–232 (PGDR…AARL) and 254–360 (NYLK…GVLS).

Expressed in many tissues, with highest levels in fat, heart and skeletal muscle. Also detected in kidney, liver and lung.

It is found in the cytoplasm. Its subcellular location is the cell membrane. GTPase-activating protein for the ADP ribosylation factor family (Potential). Binds phosphatidylinositol 4,5-bisphosphate, phosphatidylinositol 3,4,5-trisphosphate (PtdInsP3) and inositol 1,3,4,5-tetrakisphosphate (InsP4). Binding of phosphatidylinositol 3,5-bisphosphate and phosphatidylinositol 3,4-bisphosphate occurs at a much lower affinity. Possesses a stoichiometry of two binding sites for InsP4 with identical affinity. This Rattus norvegicus (Rat) protein is Arf-GAP with dual PH domain-containing protein 2 (Adap2).